The following is a 460-amino-acid chain: NADH-ubiquinone oxidoreductase chain 4 (460 aa).

12 helical membrane passes run 20-42 (PKWL…LMWF), 61-81 (PLST…ILAS), 93-113 (QRLY…AFGA), 114-134 (TEII…LIII), 148-168 (TYFL…LLLL), 195-215 (IWWA…GVHL), 225-245 (PVAG…YGMM), 258-278 (LAYP…SICL), 285-304 (SLIA…GILI), 308-330 (WGFS…LFCL), 351-371 (IIFP…LALP), and 394-414 (ILLT…MFLM).

It belongs to the complex I subunit 4 family.

The protein localises to the mitochondrion membrane. It catalyses the reaction a ubiquinone + NADH + 5 H(+)(in) = a ubiquinol + NAD(+) + 4 H(+)(out). Functionally, core subunit of the mitochondrial membrane respiratory chain NADH dehydrogenase (Complex I) that is believed to belong to the minimal assembly required for catalysis. Complex I functions in the transfer of electrons from NADH to the respiratory chain. The immediate electron acceptor for the enzyme is believed to be ubiquinone. This is NADH-ubiquinone oxidoreductase chain 4 (MT-ND4) from Carassius auratus (Goldfish).